The primary structure comprises 149 residues: Large ribosomal subunit protein uL13 (149 aa).

It belongs to the universal ribosomal protein uL13 family. In terms of assembly, part of the 50S ribosomal subunit.

Functionally, this protein is one of the early assembly proteins of the 50S ribosomal subunit, although it is not seen to bind rRNA by itself. It is important during the early stages of 50S assembly. The chain is Large ribosomal subunit protein uL13 from Thermobifida fusca (strain YX).